The chain runs to 1394 residues: ABC transporter patM (1394 aa).

The tract at residues 1–41 is disordered; the sequence is MVDNYHSSLDVAKTPIQSDADAQKSEAETEGPSSKSSQIAA. An ABC transporter 1 domain is found at 98 to 341; sequence SPLQNRQRKQ…FEDLGFECLS (244 aa). 6 helical membrane passes run 437–457, 467–487, 511–531, 546–566, 579–599, and 688–708; these read SLWA…GTLF, LFIF…QSMA, IAYA…AICY, GNFF…SMFF, AVLP…LYVP, and VGIN…GMEM. Positions 727-755 are disordered; sequence VTHRRDKIDSETGQDQGNESSEMSAGQSN. The segment covering 737 to 755 has biased composition (polar residues); sequence ETGQDQGNESSEMSAGQSN. The ABC transporter 2 domain maps to 767-1013; sequence DKSHNLAWTN…EAIQYFQPRS (247 aa). 808–815 lines the ATP pocket; it reads GVSGAGKT. Helical transmembrane passes span 1131-1151, 1177-1197, 1219-1239, 1245-1265, 1280-1300, and 1368-1388; these read GAYN…PLGL, LAFV…SSLV, FLMY…CASL, AAFA…GTLS, ISPL…DLPI, and IGVF…MTYL.

The protein belongs to the ABC transporter superfamily. ABCG family. PDR (TC 3.A.1.205) subfamily.

The protein localises to the vacuole membrane. The protein resides in the cell membrane. Its pathway is mycotoxin biosynthesis; patulin biosynthesis. In terms of biological role, ABC transporter; part of the gene cluster that mediates the biosynthesis of patulin, an acetate-derived tetraketide mycotoxin produced by several fungal species that shows antimicrobial properties against several bacteria. May be involved in the secretion of E-ascladiol to be converted to patulin by the secreted patulin synthase patE. In Penicillium expansum (Blue mold rot fungus), this protein is ABC transporter patM.